Reading from the N-terminus, the 196-residue chain is Large ribosomal subunit protein uL5 (196 aa).

This sequence belongs to the universal ribosomal protein uL5 family. Part of the 50S ribosomal subunit; part of the 5S rRNA/L5/L18/L25 subcomplex. Contacts the 5S rRNA and the P site tRNA. Forms a bridge to the 30S subunit in the 70S ribosome.

In terms of biological role, this is one of the proteins that bind and probably mediate the attachment of the 5S RNA into the large ribosomal subunit, where it forms part of the central protuberance. In the 70S ribosome it contacts protein S13 of the 30S subunit (bridge B1b), connecting the 2 subunits; this bridge is implicated in subunit movement. Contacts the P site tRNA; the 5S rRNA and some of its associated proteins might help stabilize positioning of ribosome-bound tRNAs. This is Large ribosomal subunit protein uL5 from Prosthecochloris aestuarii (strain DSM 271 / SK 413).